Here is a 358-residue protein sequence, read N- to C-terminus: tRNA-specific 2-thiouridylase MnmA (358 aa).

Residues 8–15 and Met35 each bind ATP; that span reads AMSGGVDS. The interval 95-97 is interaction with target base in tRNA; the sequence is NPD. Residue Cys100 is the Nucleophile of the active site. Cys100 and Cys194 form a disulfide bridge. Gly124 contacts ATP. The tract at residues 144 to 146 is interaction with tRNA; the sequence is KDQ. The active-site Cysteine persulfide intermediate is Cys194. The segment at 301–302 is interaction with tRNA; that stretch reads RY.

This sequence belongs to the MnmA/TRMU family.

It localises to the cytoplasm. It carries out the reaction S-sulfanyl-L-cysteinyl-[protein] + uridine(34) in tRNA + AH2 + ATP = 2-thiouridine(34) in tRNA + L-cysteinyl-[protein] + A + AMP + diphosphate + H(+). In terms of biological role, catalyzes the 2-thiolation of uridine at the wobble position (U34) of tRNA, leading to the formation of s(2)U34. In Chlamydia trachomatis serovar L2 (strain ATCC VR-902B / DSM 19102 / 434/Bu), this protein is tRNA-specific 2-thiouridylase MnmA.